The primary structure comprises 412 residues: Multifunctional CCA protein (412 aa).

Residues glycine 8 and arginine 11 each contribute to the ATP site. The CTP site is built by glycine 8 and arginine 11. Glutamate 21 and aspartate 23 together coordinate Mg(2+). ATP is bound by residues arginine 91, arginine 137, and arginine 140. Positions 91, 137, and 140 each coordinate CTP. Residues 228–329 (TGIHTLMTLA…LKLFNAIDVW (102 aa)) form the HD domain.

It belongs to the tRNA nucleotidyltransferase/poly(A) polymerase family. Bacterial CCA-adding enzyme type 1 subfamily. In terms of assembly, monomer. Can also form homodimers and oligomers. Mg(2+) is required as a cofactor. Requires Ni(2+) as cofactor.

It carries out the reaction a tRNA precursor + 2 CTP + ATP = a tRNA with a 3' CCA end + 3 diphosphate. The enzyme catalyses a tRNA with a 3' CCA end + 2 CTP + ATP = a tRNA with a 3' CCACCA end + 3 diphosphate. Its function is as follows. Catalyzes the addition and repair of the essential 3'-terminal CCA sequence in tRNAs without using a nucleic acid template. Adds these three nucleotides in the order of C, C, and A to the tRNA nucleotide-73, using CTP and ATP as substrates and producing inorganic pyrophosphate. tRNA 3'-terminal CCA addition is required both for tRNA processing and repair. Also involved in tRNA surveillance by mediating tandem CCA addition to generate a CCACCA at the 3' terminus of unstable tRNAs. While stable tRNAs receive only 3'-terminal CCA, unstable tRNAs are marked with CCACCA and rapidly degraded. The sequence is that of Multifunctional CCA protein from Yersinia pestis.